The primary structure comprises 249 residues: MRILISNDDGVNSPGLAALYAALADYTECVVIAPDQDKSGASSSLTLDRPLHPQTLANGFISLNGTPTDCVHLGIHGLLEREPEMVVSGINLGANLGDDVLYSGTVAAALEGRFLQRPSFAFSFLSRQPDNLATAAHYARLLVEAHEQFDLPPRTVLNVNIPNLPLEHIRGIQLTRLGHRARAAAPVKVVDPRGRAGYWIAAAGDVEDGGAGTDFHAVVQGYVSITPLQLDRTYQDGFSSLNNWLEGRR.

4 residues coordinate a divalent metal cation: D8, D9, S39, and N91.

This sequence belongs to the SurE nucleotidase family. A divalent metal cation is required as a cofactor.

It localises to the cytoplasm. It catalyses the reaction a ribonucleoside 5'-phosphate + H2O = a ribonucleoside + phosphate. Nucleotidase that shows phosphatase activity on nucleoside 5'-monophosphates. In Pseudomonas syringae pv. tomato (strain ATCC BAA-871 / DC3000), this protein is 5'-nucleotidase SurE.